The sequence spans 370 residues: 2-Hydroxyacid oxidase 1 (370 aa).

One can recognise an FMN hydroxy acid dehydrogenase domain in the interval 1–365 (MLPRLVCISD…DKTLVRKNPL (365 aa)). Residue tyrosine 26 coordinates glyoxylate. FMN contacts are provided by residues 79–81 (ATA), serine 108, and glutamine 130. Residue tyrosine 132 coordinates glyoxylate. Threonine 158 contributes to the FMN binding site. Arginine 167 contributes to the glyoxylate binding site. At lysine 184 the chain carries N6-succinyllysine. Residues serine 194 and serine 230 each carry the phosphoserine modification. The FMN site is built by lysine 236 and serine 258. Residues histidine 260 and arginine 263 each contribute to the glyoxylate site. The Proton acceptor role is filled by histidine 260. FMN-binding positions include 291–295 (DGGVR) and 314–315 (GR). The Microbody targeting signal motif lies at 368 to 370 (SKI).

Belongs to the FMN-dependent alpha-hydroxy acid dehydrogenase family. Homotetramer. Requires FMN as cofactor. In terms of tissue distribution, liver.

The protein resides in the peroxisome matrix. It carries out the reaction a (2S)-2-hydroxycarboxylate + O2 = a 2-oxocarboxylate + H2O2. The catalysed reaction is glycolate + O2 = glyoxylate + H2O2. The enzyme catalyses glyoxylate + O2 + H2O = oxalate + H2O2 + H(+). It catalyses the reaction 2-hydroxyhexadecanoate + O2 = 2-oxohexadecanoate + H2O2. It carries out the reaction 2-hydroxyoctanoate + O2 = 2-oxooctanoate + H2O2. It functions in the pathway amino-acid biosynthesis; glycine biosynthesis. In terms of biological role, broad substrate specificity (S)-2-hydroxy-acid oxidase that preferentially oxidizes glycolate. The glyoxylate produced by the oxidation of glycolate can then be utilized by alanine-glyoxylate aminotransferase for the peroxisomal synthesis of glycine; this pathway appears to be an important step for the detoxification of glyoxylate which, if allowed to accumulate, may be metabolized to oxalate with formation of kidney stones. Can also catalyze the oxidation glyoxylate, and long chain hydroxyacids such as 2-hydroxyhexadecanoate and 2-hydroxyoctanoate. Active in vitro with the artificial electron acceptor 2,6-dichlorophenolindophenol (DCIP), but O2 is believed to be the physiological electron acceptor, leading to the production of H2O2. In Mus musculus (Mouse), this protein is 2-Hydroxyacid oxidase 1.